A 502-amino-acid polypeptide reads, in one-letter code: Actin nucleation-promoting factor WAS (502 aa).

One can recognise a WH1 domain in the interval 39-148; that stretch reads LGRKCLTLAT…ALVQEKIQKR (110 aa). A disordered region spans residues 146-240; sequence QKRNQRQSGD…KKISKADIGA (95 aa). Positions 201–211 are enriched in polar residues; the sequence is DIQNPDITSSR. Ser221 is modified (phosphoserine). Positions 238 to 251 constitute a CRIB domain; the sequence is IGAPSGFKHVSHVG. A Phosphotyrosine; by FYN and HCK modification is found at Tyr291. The tract at residues 307 to 502 is disordered; sequence MRRQEPLPPP…DEDEDDEWDD (196 aa). GRSGPLPPXP motif repeat units follow at residues 337 to 346 and 376 to 385; these read GRSGPLPPVP and GRSGPLPPPP. Over residues 341–419 the composition is skewed to pro residues; it reads PLPPVPLGIA…PAPPPLPPAL (79 aa). Positions 430-447 constitute a WH2 domain; it reads GRGALLDQIRQGIQLNKT. Phosphoserine; by CK2 occurs at positions 483 and 484. The segment covering 486–502 has biased composition (acidic residues); the sequence is EGEDQAGDEDEDDEWDD.

Binds the Arp2/3 complex. Interacts with CDC42, RAC, NCK, HCK, FYN, SRC kinase FGR, BTK, ABL1, PSTPIP1, WIP, and to the p85 subunit of PLC-gamma. Interacts (via C-terminus) with ALDOA. Interacts with NCK1 (via SH3 domains). Interacts with FCHSD2. As to quaternary structure, (Microbial infection) Interacts with E.coli effector protein EspF(U). Phosphorylated at Tyr-291 by FYN and HCK, inducing WAS effector activity after TCR engagement. Phosphorylation at Tyr-291 enhances WAS activity in promoting actin polymerization and filopodia formation. As to expression, expressed predominantly in the thymus. Also found, to a much lesser extent, in the spleen.

The protein localises to the cytoplasm. It is found in the cytoskeleton. It localises to the nucleus. Its function is as follows. Effector protein for Rho-type GTPases that regulates actin filament reorganization via its interaction with the Arp2/3 complex. Important for efficient actin polymerization. Possible regulator of lymphocyte and platelet function. Mediates actin filament reorganization and the formation of actin pedestals upon infection by pathogenic bacteria. In addition to its role in the cytoplasmic cytoskeleton, also promotes actin polymerization in the nucleus, thereby regulating gene transcription and repair of damaged DNA. Promotes homologous recombination (HR) repair in response to DNA damage by promoting nuclear actin polymerization, leading to drive motility of double-strand breaks (DSBs). The sequence is that of Actin nucleation-promoting factor WAS (WAS) from Homo sapiens (Human).